A 229-amino-acid polypeptide reads, in one-letter code: Large ribosomal subunit protein uL1 (229 aa).

Belongs to the universal ribosomal protein uL1 family. In terms of assembly, part of the 50S ribosomal subunit.

Binds directly to 23S rRNA. The L1 stalk is quite mobile in the ribosome, and is involved in E site tRNA release. Functionally, protein L1 is also a translational repressor protein, it controls the translation of the L11 operon by binding to its mRNA. The chain is Large ribosomal subunit protein uL1 from Clostridium botulinum (strain Alaska E43 / Type E3).